The chain runs to 600 residues: Elongation factor 4 (600 aa).

Residues 5-187 form the tr-type G domain; sequence KYIRNFSIIA…AIVNKLPPPK (183 aa). GTP is bound by residues 17–22 and 134–137; these read DHGKST and NKLD.

Belongs to the TRAFAC class translation factor GTPase superfamily. Classic translation factor GTPase family. LepA subfamily.

The protein resides in the cell inner membrane. The enzyme catalyses GTP + H2O = GDP + phosphate + H(+). In terms of biological role, required for accurate and efficient protein synthesis under certain stress conditions. May act as a fidelity factor of the translation reaction, by catalyzing a one-codon backward translocation of tRNAs on improperly translocated ribosomes. Back-translocation proceeds from a post-translocation (POST) complex to a pre-translocation (PRE) complex, thus giving elongation factor G a second chance to translocate the tRNAs correctly. Binds to ribosomes in a GTP-dependent manner. The chain is Elongation factor 4 from Rickettsia conorii (strain ATCC VR-613 / Malish 7).